Here is a 378-residue protein sequence, read N- to C-terminus: MATALPPRLQPVRGNETLREHYQYVGKLAGRLKEASEGSTLTTVLFLVICSFIVLENLMVLIAIWKNNKFHNRMYFFIGNLALCDLLAGIAYKVNILMSGKKTFSLSPTVWFLREGSMFVALGASTCSLLAIAIERHLTMIKMRPYDANKRHRVFLLIGMCWLIAFTLGALPILGWNCLHNLPDCSTILPLYSKKYIAFCISIFTAILVTIVILYARIYFLVKSSSRKVANHNNSERSMALLRTVVIVVSVFIACWSPLFILFLIDVACRVQACPILFKAQWFIVLAVLNSAMNPVIYTLASKEMRRAFFRLVCNCLVRGRGARASPIQPALDPSRSKSSSSNNSSHSPKVKEDLPHTAPSSCIMDKNAALQNGIFCN.

Topologically, residues 1–40 are extracellular; that stretch reads MATALPPRLQPVRGNETLREHYQYVGKLAGRLKEASEGST. N-linked (GlcNAc...) asparagine glycosylation is present at Asn-15. A helical membrane pass occupies residues 41–65; it reads LTTVLFLVICSFIVLENLMVLIAIW. Topologically, residues 66 to 72 are cytoplasmic; the sequence is KNNKFHN. A helical transmembrane segment spans residues 73 to 101; sequence RMYFFIGNLALCDLLAGIAYKVNILMSGK. Residues 102-115 lie on the Extracellular side of the membrane; sequence KTFSLSPTVWFLRE. The helical transmembrane segment at 116 to 134 threads the bilayer; it reads GSMFVALGASTCSLLAIAI. Over 135–153 the chain is Cytoplasmic; it reads ERHLTMIKMRPYDANKRHR. A helical transmembrane segment spans residues 154–179; that stretch reads VFLLIGMCWLIAFTLGALPILGWNCL. The Extracellular segment spans residues 180–195; it reads HNLPDCSTILPLYSKK. The chain crosses the membrane as a helical span at residues 196–216; the sequence is YIAFCISIFTAILVTIVILYA. Topologically, residues 217 to 243 are cytoplasmic; that stretch reads RIYFLVKSSSRKVANHNNSERSMALLR. The chain crosses the membrane as a helical span at residues 244 to 265; it reads TVVIVVSVFIACWSPLFILFLI. Topologically, residues 266–281 are extracellular; the sequence is DVACRVQACPILFKAQ. The chain crosses the membrane as a helical span at residues 282-302; the sequence is WFIVLAVLNSAMNPVIYTLAS. Over 303–378 the chain is Cytoplasmic; it reads KEMRRAFFRL…AALQNGIFCN (76 aa). Phosphoserine is present on Ser-326. Residues 327–357 are disordered; the sequence is PIQPALDPSRSKSSSSNNSSHSPKVKEDLPH. Over residues 337–348 the composition is skewed to low complexity; sequence SKSSSSNNSSHS.

Belongs to the G-protein coupled receptor 1 family. Expressed in all tissues, but most abundantly in heart, placenta, kidney, and liver.

It is found in the cell membrane. Receptor for the lysosphingolipid sphingosine 1-phosphate (S1P). S1P is a bioactive lysophospholipid that elicits diverse physiological effect on most types of cells and tissues. When expressed in rat HTC4 hepatoma cells, is capable of mediating S1P-induced cell proliferation and suppression of apoptosis. This is Sphingosine 1-phosphate receptor 3 from Homo sapiens (Human).